The chain runs to 396 residues: S-adenosylmethionine synthase (396 aa).

His-14 is a binding site for ATP. Residue Asp-16 participates in Mg(2+) binding. Glu-42 is a K(+) binding site. The L-methionine site is built by Glu-55 and Gln-98. Residues 98 to 108 (QSPDIAQGVHG) are flexible loop. ATP-binding positions include 167 to 169 (DAK), 234 to 235 (RF), Asp-243, 249 to 250 (RK), Ser-266, and Lys-270. Asp-243 contacts L-methionine. Residue Lys-274 coordinates L-methionine.

It belongs to the AdoMet synthase family. In terms of assembly, homotetramer; dimer of dimers. It depends on Mg(2+) as a cofactor. Requires K(+) as cofactor.

It is found in the cytoplasm. The enzyme catalyses L-methionine + ATP + H2O = S-adenosyl-L-methionine + phosphate + diphosphate. It participates in amino-acid biosynthesis; S-adenosyl-L-methionine biosynthesis; S-adenosyl-L-methionine from L-methionine: step 1/1. Its function is as follows. Catalyzes the formation of S-adenosylmethionine (AdoMet) from methionine and ATP. The overall synthetic reaction is composed of two sequential steps, AdoMet formation and the subsequent tripolyphosphate hydrolysis which occurs prior to release of AdoMet from the enzyme. The polypeptide is S-adenosylmethionine synthase (Treponema pallidum (strain Nichols)).